The sequence spans 708 residues: Tryptophan synthase (708 aa).

Residues 1-305 (MEGIKQTFQR…EADIDAQLAA (305 aa)) form a tryptophan synthase alpha chain region. Catalysis depends on proton acceptor residues Glu49 and Asp60. A tryptophan synthase beta chain region spans residues 306–708 (LHGTIPKRFG…GPKIGWDLRF (403 aa)). An N6-(pyridoxal phosphate)lysine modification is found at Lys392.

This sequence in the N-terminal section; belongs to the TrpA family. It in the C-terminal section; belongs to the TrpB family. It depends on pyridoxal 5'-phosphate as a cofactor.

It catalyses the reaction (1S,2R)-1-C-(indol-3-yl)glycerol 3-phosphate + L-serine = D-glyceraldehyde 3-phosphate + L-tryptophan + H2O. The protein operates within amino-acid biosynthesis; L-tryptophan biosynthesis; L-tryptophan from chorismate: step 5/5. This is Tryptophan synthase (trp-3) from Neurospora crassa (strain ATCC 24698 / 74-OR23-1A / CBS 708.71 / DSM 1257 / FGSC 987).